A 120-amino-acid chain; its full sequence is MKLSRKESVQRRHRRIRKKVNGTPNCPRLAVFRSNLHIYAQIIDDVGQHTIAAASTVEPDLKKSLSSGSTCEASAAVGKLVAERALAQGIEQVVFDRGGNLYHGRVKALADAAREAGLQF.

This sequence belongs to the universal ribosomal protein uL18 family. Part of the 50S ribosomal subunit; part of the 5S rRNA/L5/L18/L25 subcomplex. Contacts the 5S and 23S rRNAs.

This is one of the proteins that bind and probably mediate the attachment of the 5S RNA into the large ribosomal subunit, where it forms part of the central protuberance. The chain is Large ribosomal subunit protein uL18 from Rippkaea orientalis (strain PCC 8801 / RF-1) (Cyanothece sp. (strain PCC 8801)).